A 496-amino-acid polypeptide reads, in one-letter code: Xylulose kinase (496 aa).

83–84 (MH) is a substrate binding site. Asp237 (proton acceptor) is an active-site residue.

This sequence belongs to the FGGY kinase family.

The catalysed reaction is D-xylulose + ATP = D-xylulose 5-phosphate + ADP + H(+). Its function is as follows. Catalyzes the phosphorylation of D-xylulose to D-xylulose 5-phosphate. In Staphylococcus epidermidis (strain ATCC 12228 / FDA PCI 1200), this protein is Xylulose kinase.